The following is a 296-amino-acid chain: tRNA U34 carboxymethyltransferase (296 aa).

Carboxy-S-adenosyl-L-methionine contacts are provided by residues lysine 64, tryptophan 78, lysine 83, glycine 102, 124-126 (DPS), 151-152 (VE), tyrosine 171, and arginine 286.

Belongs to the class I-like SAM-binding methyltransferase superfamily. CmoB family. As to quaternary structure, homotetramer.

It catalyses the reaction carboxy-S-adenosyl-L-methionine + 5-hydroxyuridine(34) in tRNA = 5-carboxymethoxyuridine(34) in tRNA + S-adenosyl-L-homocysteine + H(+). Catalyzes carboxymethyl transfer from carboxy-S-adenosyl-L-methionine (Cx-SAM) to 5-hydroxyuridine (ho5U) to form 5-carboxymethoxyuridine (cmo5U) at position 34 in tRNAs. The polypeptide is tRNA U34 carboxymethyltransferase (Sulfurimonas denitrificans (strain ATCC 33889 / DSM 1251) (Thiomicrospira denitrificans (strain ATCC 33889 / DSM 1251))).